Here is a 257-residue protein sequence, read N- to C-terminus: uncharacterized protein (257 aa).

The first 22 residues, 1–22 (MGYLKRFALYISVMILIFAIAG), serve as a signal peptide directing secretion. The N-palmitoyl cysteine moiety is linked to residue Cys23. The S-diacylglycerol cysteine moiety is linked to residue Cys23.

The protein belongs to the staphylococcal tandem lipoprotein family.

It localises to the cell membrane. This is an uncharacterized protein from Staphylococcus aureus (strain USA300).